The chain runs to 451 residues: Phosphoglucosamine mutase (451 aa).

The active-site Phosphoserine intermediate is Ser107. Mg(2+)-binding residues include Ser107, Asp246, Asp248, and Asp250. Ser107 bears the Phosphoserine mark.

This sequence belongs to the phosphohexose mutase family. Requires Mg(2+) as cofactor. Activated by phosphorylation.

It catalyses the reaction alpha-D-glucosamine 1-phosphate = D-glucosamine 6-phosphate. Functionally, catalyzes the conversion of glucosamine-6-phosphate to glucosamine-1-phosphate. The chain is Phosphoglucosamine mutase from Burkholderia vietnamiensis (strain G4 / LMG 22486) (Burkholderia cepacia (strain R1808)).